Consider the following 90-residue polypeptide: Probable Fe(2+)-trafficking protein (90 aa).

It belongs to the Fe(2+)-trafficking protein family.

In terms of biological role, could be a mediator in iron transactions between iron acquisition and iron-requiring processes, such as synthesis and/or repair of Fe-S clusters in biosynthetic enzymes. The polypeptide is Probable Fe(2+)-trafficking protein (Chromobacterium violaceum (strain ATCC 12472 / DSM 30191 / JCM 1249 / CCUG 213 / NBRC 12614 / NCIMB 9131 / NCTC 9757 / MK)).